Consider the following 829-residue polypeptide: Probable beta-glucosidase H (829 aa).

Asn13 carries N-linked (GlcNAc...) asparagine glycosylation. Asp225 is a catalytic residue. N-linked (GlcNAc...) asparagine glycosylation is found at Asn304, Asn473, Asn602, Asn627, and Asn664. Positions 389 to 548 (RMLSNAVIHF…DPEQMVANAV (160 aa)) constitute a PA14 domain.

The protein belongs to the glycosyl hydrolase 3 family.

It is found in the secreted. The enzyme catalyses Hydrolysis of terminal, non-reducing beta-D-glucosyl residues with release of beta-D-glucose.. Its pathway is glycan metabolism; cellulose degradation. Functionally, beta-glucosidases are one of a number of cellulolytic enzymes involved in the degradation of cellulosic biomass. Catalyzes the last step releasing glucose from the inhibitory cellobiose. The polypeptide is Probable beta-glucosidase H (bglH) (Neosartorya fischeri (strain ATCC 1020 / DSM 3700 / CBS 544.65 / FGSC A1164 / JCM 1740 / NRRL 181 / WB 181) (Aspergillus fischerianus)).